Here is a 155-residue protein sequence, read N- to C-terminus: V-type proton ATPase 16 kDa proteolipid subunit c (155 aa).

The Lumenal portion of the chain corresponds to 1–10 (MSESKSGPEY). The helical transmembrane segment at 11-33 (ASFFAVMGASAAMVFSALGAAYG) threads the bilayer. At 34–55 (TAKSGTGIAAMSVMRPEQIMKS) the chain is on the cytoplasmic side. The helical transmembrane segment at 56–76 (IIPVVMAGIIAIYGLVVAVLI) threads the bilayer. Residues 77–92 (ANSLNDDISLYKSFLQ) are Lumenal-facing. Residues 93–114 (LGAGLSVGLSGLAAGFAIGIVG) traverse the membrane as a helical segment. Residues 115–131 (DAGVRGTAQQPRLFVGM) are Cytoplasmic-facing. Residues 132-152 (ILILIFAEVLGLYGLIVALIL) traverse the membrane as a helical segment. Over 153–155 (STK) the chain is Lumenal.

Belongs to the V-ATPase proteolipid subunit family. As to quaternary structure, V-ATPase is a heteromultimeric enzyme made up of two complexes: the ATP-hydrolytic V1 complex and the proton translocation V0 complex. The V1 complex consists of three catalytic AB heterodimers that form a heterohexamer, three peripheral stalks each consisting of EG heterodimers, one central rotor including subunits D and F, and the regulatory subunits C and H. The proton translocation complex V0 consists of the proton transport subunit a, a ring of proteolipid subunits c9c'', rotary subunit d, subunits e and f, and the accessory subunits ATP6AP1/Ac45 and ATP6AP2/PRR. Interacts with the V0 complex V-ATPase subunit a4 ATP6V0A4. Interacts with LASS2. Interacts with RNF182; this interaction leads to ubiquitination and degradation via the proteasome pathway. (Microbial infection) Interacts with HTLV-1 accessory protein p12I. Ubiquitinated by RNF182, leading to its degradation via the ubiquitin-proteasome pathway.

The protein resides in the cytoplasmic vesicle. It localises to the clathrin-coated vesicle membrane. The protein localises to the secretory vesicle. Its subcellular location is the synaptic vesicle membrane. Its function is as follows. Proton-conducting pore forming subunit of the V0 complex of vacuolar(H+)-ATPase (V-ATPase), a multisubunit enzyme composed of a peripheral complex (V1) that hydrolyzes ATP and a membrane integral complex (V0) that translocates protons. V-ATPase is responsible for acidifying and maintaining the pH of intracellular compartments, and in some cell types, it is targeted to the plasma membrane, where it is responsible for acidifying the extracellular environment. The chain is V-type proton ATPase 16 kDa proteolipid subunit c (ATP6V0C) from Homo sapiens (Human).